A 190-amino-acid chain; its full sequence is Threonylcarbamoyl-AMP synthase (190 aa).

Positions 7–190 (TGSIAAAVDL…ALTGELFRQG (184 aa)) constitute a YrdC-like domain.

It belongs to the SUA5 family. TsaC subfamily.

The protein resides in the cytoplasm. It catalyses the reaction L-threonine + hydrogencarbonate + ATP = L-threonylcarbamoyladenylate + diphosphate + H2O. In terms of biological role, required for the formation of a threonylcarbamoyl group on adenosine at position 37 (t(6)A37) in tRNAs that read codons beginning with adenine. Catalyzes the conversion of L-threonine, HCO(3)(-)/CO(2) and ATP to give threonylcarbamoyl-AMP (TC-AMP) as the acyladenylate intermediate, with the release of diphosphate. In Salmonella arizonae (strain ATCC BAA-731 / CDC346-86 / RSK2980), this protein is Threonylcarbamoyl-AMP synthase.